Here is a 257-residue protein sequence, read N- to C-terminus: Small ribosomal subunit protein uS4c (257 aa).

2 S4 RNA-binding domains span residues 110 to 170 (MRLD…QLVN) and 189 to 255 (KTLP…KNYL).

It belongs to the universal ribosomal protein uS4 family. In terms of assembly, part of the 30S ribosomal subunit. Contacts protein S5. The interaction surface between S4 and S5 is involved in control of translational fidelity.

Its subcellular location is the plastid. The protein resides in the chloroplast. Functionally, one of the primary rRNA binding proteins, it binds directly to 16S rRNA where it nucleates assembly of the body of the 30S subunit. With S5 and S12 plays an important role in translational accuracy. The sequence is that of Small ribosomal subunit protein uS4c (rps4) from Chlamydomonas reinhardtii (Chlamydomonas smithii).